The chain runs to 288 residues: MAGEQTTTEYISHHLTNWTYGYLPGEGWKVAYNAEEASAMGFKAIHLDSMLWSIGLGIVFCAIFWMVARKVTSGVPGKTQAAVEMIVEFVDNNVRDSYSGTSKLIAPLALTIFVWIFLMNLMDLLPVDFIPMIAGQIGALMGHDPHHVYFKIVPTTDPNITLGMSFSVFILILFYSIKEKGLGGFVGELTLHPFSAKNPIVQIILIPINFILEFVTLIAKPISLGLRLFGNMYAGELIFILIALMPFWIQWALSVPWAIFHILIITLQAFVFMMLTIVYMSLASSTEH.

6 consecutive transmembrane segments (helical) span residues 47 to 67 (LDSM…FWMV), 104 to 124 (LIAP…LMDL), 157 to 177 (DPNI…FYSI), 199 to 219 (PIVQ…TLIA), 237 to 257 (LIFI…SVPW), and 258 to 278 (AIFH…LTIV).

The protein belongs to the ATPase A chain family. As to quaternary structure, F-type ATPases have 2 components, CF(1) - the catalytic core - and CF(0) - the membrane proton channel. CF(1) has five subunits: alpha(3), beta(3), gamma(1), delta(1), epsilon(1). CF(0) has three main subunits: a(1), b(2) and c(9-12). The alpha and beta chains form an alternating ring which encloses part of the gamma chain. CF(1) is attached to CF(0) by a central stalk formed by the gamma and epsilon chains, while a peripheral stalk is formed by the delta and b chains.

It is found in the cell inner membrane. Its function is as follows. Key component of the proton channel; it plays a direct role in the translocation of protons across the membrane. The protein is ATP synthase subunit a of Psychrobacter cryohalolentis (strain ATCC BAA-1226 / DSM 17306 / VKM B-2378 / K5).